The chain runs to 339 residues: DNA-directed RNA polymerase subunit alpha (339 aa).

Residues 1–235 (MVIQKNWQEL…DQLQVFVNFE (235 aa)) are alpha N-terminal domain (alpha-NTD). Residues 251–339 (FNPALLKKVD…DLAKRFEEHY (89 aa)) form an alpha C-terminal domain (alpha-CTD) region.

The protein belongs to the RNA polymerase alpha chain family. As to quaternary structure, homodimer. The RNAP catalytic core consists of 2 alpha, 1 beta, 1 beta' and 1 omega subunit. When a sigma factor is associated with the core the holoenzyme is formed, which can initiate transcription.

The catalysed reaction is RNA(n) + a ribonucleoside 5'-triphosphate = RNA(n+1) + diphosphate. Its function is as follows. DNA-dependent RNA polymerase catalyzes the transcription of DNA into RNA using the four ribonucleoside triphosphates as substrates. In Methylorubrum populi (strain ATCC BAA-705 / NCIMB 13946 / BJ001) (Methylobacterium populi), this protein is DNA-directed RNA polymerase subunit alpha.